The primary structure comprises 728 residues: UvrABC system protein C (728 aa).

One can recognise a GIY-YIG domain in the interval 16–95 (DSPGVYRFRD…IKEYDPRFNV (80 aa)). Residues 208–243 (GTYLRRLERQMAEAAEEMEYERAARLRDDIGALKKA) enclose the UVR domain. 2 disordered regions span residues 473 to 535 (ADGE…GRPK) and 689 to 728 (VNTA…GQER). The span at 487–505 (GDAAPNGDAAPNDGAAPDD) shows a compositional bias: low complexity.

Belongs to the UvrC family. Interacts with UvrB in an incision complex.

Its subcellular location is the cytoplasm. The UvrABC repair system catalyzes the recognition and processing of DNA lesions. UvrC both incises the 5' and 3' sides of the lesion. The N-terminal half is responsible for the 3' incision and the C-terminal half is responsible for the 5' incision. This is UvrABC system protein C from Streptomyces coelicolor (strain ATCC BAA-471 / A3(2) / M145).